The sequence spans 144 residues: Snake venom vascular endothelial growth factor toxin VR-1 (144 aa).

Residues 1–24 form the signal peptide; that stretch reads MAAYLLAVAILFCIQGWPSGTVQG. Glutamine 25 is subject to Pyrrolidone carboxylic acid. 3 disulfide bridges follow: cysteine 38/cysteine 80, cysteine 69/cysteine 115, and cysteine 73/cysteine 117. Positions 120–134 are enriched in basic and acidic residues; it reads RWKQGEPEGPKEPRR. Residues 120–144 form a disordered region; the sequence is RWKQGEPEGPKEPRRGGVRAKFPFD. The propeptide occupies 134–144; that stretch reads RGGVRAKFPFD.

It belongs to the PDGF/VEGF growth factor family. Snake venom VEGF subfamily. Homodimer; disulfide-linked. Interacts with VEGF receptor-2 (KDR) with high affinity, but not with VEGF receptor-1 (Flt-1), VEGF receptor-3 (FLT4), and neuropilin-1 (NRP1). As to expression, expressed by the venom gland.

The protein resides in the secreted. In terms of biological role, snake venom VEGFs may contribute to venom dispersion and prey subjugation by inducing vascular permeability and hypotension. This protein induces angiogenesis probably through VEGF receptor (KDR/VEGFR-2) signaling, as well as drastic hypotension. The hypotension is mediated by nitric oxide, which is produced by VEGF-activated endothelium NO synthase. May also induce vascular permeability. This Daboia russelii (Russel's viper) protein is Snake venom vascular endothelial growth factor toxin VR-1.